The sequence spans 262 residues: uncharacterized protein (262 aa).

Disordered regions lie at residues 1 to 30 (MGKKKFIENEDGTTEVQETESEAPKDKKEK) and 232 to 262 (EEEEVEDEADEETDVKEKVKEEEDEDEDMEE). Composition is skewed to acidic residues over residues 9-21 (NEDGTTEVQETES), 232-245 (EEEEVEDEADEETD), and 253-262 (EEDEDEDMEE).

This is an uncharacterized protein from Caenorhabditis elegans.